Here is a 327-residue protein sequence, read N- to C-terminus: Probable cell division protein WhiA (327 aa).

The H-T-H motif DNA-binding region spans 275–308 (SLEELGQLADPPMTKDAVAGRIRRLLSMADRRAR).

Belongs to the WhiA family.

Its function is as follows. Involved in cell division and chromosome segregation. This chain is Probable cell division protein WhiA, found in Nocardia farcinica (strain IFM 10152).